We begin with the raw amino-acid sequence, 333 residues long: T-cell surface glycoprotein CD1b (333 aa).

The first 18 residues, 1 to 18 (MLLLPFQLLAVLFPGGNS), serve as a signal peptide directing secretion. Residues 19–303 (EHAFQGPTSF…YWSNPTSIGS (285 aa)) lie on the Extracellular side of the membrane. Asn38, Asn75, and Asn146 each carry an N-linked (GlcNAc...) asparagine glycan. 3 cysteine pairs are disulfide-bonded: Cys120/Cys184, Cys149/Cys163, and Cys224/Cys279. The Ig-like domain occupies 185–295 (PRYLLGVLNA…LEGQDIILYW (111 aa)). A glycan (N-linked (GlcNAc...) asparagine) is linked at Asn258. A helical membrane pass occupies residues 304–324 (IVLAIIVPSLLLLLCLALWYM). The Cytoplasmic portion of the chain corresponds to 325–333 (RRRSYQNIP). Positions 329-332 (YQNI) match the Internalization signal motif.

In terms of assembly, heterodimer with B2M (beta-2-microglobulin). Interacts with saposin C. As to expression, expressed in lymphocytes, spleen, lung, liver, kidney and heart.

It localises to the cell membrane. The protein localises to the endosome membrane. The protein resides in the lysosome membrane. In terms of biological role, antigen-presenting protein that binds self and non-self lipid and glycolipid antigens and presents them to T-cell receptors on natural killer T-cells. The sequence is that of T-cell surface glycoprotein CD1b (CD1B) from Aotus nancymaae (Ma's night monkey).